Reading from the N-terminus, the 270-residue chain is Fluoride-specific ion channel FluC 1 (270 aa).

4 helical membrane-spanning segments follow: residues 4–24 (IIIL…FIML), 35–55 (LDIL…TALY), 67–87 (IIGT…YGSV), and 96–116 (AFLI…VAVL). Na(+) is bound by residues Gly74 and Ser77.

The protein belongs to the fluoride channel Fluc/FEX (TC 1.A.43) family.

The protein resides in the cell inner membrane. The enzyme catalyses fluoride(in) = fluoride(out). With respect to regulation, na(+) is not transported, but it plays an essential structural role and its presence is essential for fluoride channel function. Functionally, fluoride-specific ion channel. Important for reducing fluoride concentration in the cell, thus reducing its toxicity. This is Fluoride-specific ion channel FluC 1 from Brucella abortus biovar 1 (strain 9-941).